A 546-amino-acid chain; its full sequence is Arginine--tRNA ligase (546 aa).

A 'HIGH' region motif is present at residues 122 to 132; sequence ANPTGPFTVGH.

The protein belongs to the class-I aminoacyl-tRNA synthetase family. In terms of assembly, monomer.

The protein localises to the cytoplasm. The catalysed reaction is tRNA(Arg) + L-arginine + ATP = L-arginyl-tRNA(Arg) + AMP + diphosphate. The chain is Arginine--tRNA ligase from Thermotoga petrophila (strain ATCC BAA-488 / DSM 13995 / JCM 10881 / RKU-1).